The following is an 85-amino-acid chain: Cell division topological specificity factor (85 aa).

This sequence belongs to the MinE family.

Its function is as follows. Prevents the cell division inhibition by proteins MinC and MinD at internal division sites while permitting inhibition at polar sites. This ensures cell division at the proper site by restricting the formation of a division septum at the midpoint of the long axis of the cell. The chain is Cell division topological specificity factor from Deinococcus geothermalis (strain DSM 11300 / CIP 105573 / AG-3a).